The primary structure comprises 514 residues: MAGGAFVSEGGGGGRSYEGGVTAFVIMTCIVAAMGGLLFGYDLGISGGVTSMEEFLTKFFPQVESQMKKAKHDTAYCKFDNQMLQLFTSSLYLAALVASFMASVITRKHGRKVSMFIGGLAFLIGALFNAFAVNVSMLIIGRLLLGVGVGFANQSTPVYLSEMAPAKIRGALNIGFQMAITIGILVANLINYGTSKMAQHGWRVSLGLAAVPAVVMVIGSFILPDTPNSMLERGKNEEAKQMLKKIRGADNVDHEFQDLIDAVEAAKKVENPWKNIMESKYRPALIFCSAIPFFQQITGINVIMFYAPVLFKTLGFGDDAALMSAVITGVVNMLSTFVSIYAVDRYGRRLLFLEGGIQMFICQLLVGSFIGARFGTSGTGTLTPATADWILAFICVYVAGFAWSWGPLGWLVPSEICPLEIRPAGQAINVSVNMFFTFLIGQFFLTMLCHMKFGLFYFFASMVAIMTVFIYFLLPETKGVPIEEMGRVWKQHWFWKKYIPEDAIIGGHDDNNTN.

Topologically, residues 1 to 18 (MAGGAFVSEGGGGGRSYE) are cytoplasmic. The next 10 membrane-spanning stretches (helical) occupy residues 19–39 (GGVT…GLLF), 86–106 (LFTS…SVIT), 113–133 (VSMF…AFAV), 135–155 (VSML…ANQS), 170–190 (GALN…ANLI), 204–224 (VSLG…FILP), 285–305 (LIFC…VIMF), 320–340 (AALM…FVSI), 350–370 (LLFL…GSFI), and 389–409 (WILA…GPLG). A disulfide bridge connects residues Cys77 and Cys449. Gln177 contacts beta-D-glucose. Positions 295, 296, 301, and 332 each coordinate beta-D-glucose. A beta-D-glucose-binding site is contributed by Trp410. 2 helical membrane passes run 428–448 (INVS…LTML) and 453–473 (FGLF…IYFL). At 474–514 (LPETKGVPIEEMGRVWKQHWFWKKYIPEDAIIGGHDDNNTN) the chain is on the cytoplasmic side.

Belongs to the major facilitator superfamily. Sugar transporter (TC 2.A.1.1) family. As to expression, expressed in primordia of lateral roots, pollinated stigmata, and pollen tubes.

The protein localises to the membrane. The catalysed reaction is D-glucose(out) + H(+)(out) = D-glucose(in) + H(+)(in). It carries out the reaction D-mannose(out) + H(+)(out) = D-mannose(in) + H(+)(in). The enzyme catalyses D-galactose(in) + H(+)(in) = D-galactose(out) + H(+)(out). In terms of biological role, hexose-H(+) symporter that catalyzes the high-affinity uptake of glucose, galactose and mannose. Proton-coupled symporter responsible for the uptake of glucose from the apoplast into the cells. The polypeptide is Sugar transport protein 10 (Arabidopsis thaliana (Mouse-ear cress)).